A 251-amino-acid polypeptide reads, in one-letter code: Flap endonuclease Xni (251 aa).

Mg(2+) is bound at residue D104. The region spanning 160–249 (VQPQQLPDYW…IDGNLQQLRL (90 aa)) is the 5'-3' exonuclease domain. Positions 171, 172, 180, 182, and 185 each coordinate K(+). The segment at 184-189 (GIGPKS) is interaction with DNA.

The protein belongs to the Xni family. Requires Mg(2+) as cofactor. K(+) is required as a cofactor.

Has flap endonuclease activity. During DNA replication, flap endonucleases cleave the 5'-overhanging flap structure that is generated by displacement synthesis when DNA polymerase encounters the 5'-end of a downstream Okazaki fragment. In Escherichia coli O17:K52:H18 (strain UMN026 / ExPEC), this protein is Flap endonuclease Xni.